Consider the following 910-residue polypeptide: Dimethylsulfide dehydrogenase subunit alpha (910 aa).

Residues methionine 1–alanine 28 constitute a signal peptide (tat-type signal). In terms of domain architecture, 4Fe-4S Mo/W bis-MGD-type spans aspartate 59–aspartate 123. [4Fe-4S] cluster-binding residues include histidine 66, cysteine 70, cysteine 74, and cysteine 109.

Belongs to the prokaryotic molybdopterin-containing oxidoreductase family. As to quaternary structure, heterotrimer of alpha, beta and gamma subunits. It depends on [4Fe-4S] cluster as a cofactor. Requires Mo-bis(molybdopterin guanine dinucleotide) as cofactor. Post-translationally, predicted to be exported by the Tat system. The position of the signal peptide cleavage has been experimentally proven.

It localises to the periplasm. It catalyses the reaction 2 Fe(III)-[cytochrome c2] + dimethyl sulfide + H2O = 2 Fe(II)-[cytochrome c2] + dimethyl sulfoxide + 2 H(+). Allows photoautotrophic growth on dimethyl sulfide (DMS) as the sole electron donor. The protein is Dimethylsulfide dehydrogenase subunit alpha (ddhA) of Rhodovulum sulfidophilum (Rhodobacter sulfidophilus).